The chain runs to 654 residues: Acetyl-coenzyme A synthetase (654 aa).

CoA is bound by residues 193 to 196 (RRGK) and Thr313. Residues 389–391 (GEP), 413–418 (DTWWQT), Asp506, and Arg521 each bind ATP. Residue Ser529 participates in CoA binding. Arg532 serves as a coordination point for ATP. 2 residues coordinate Mg(2+): His545 and Val548. Position 619 is an N6-acetyllysine (Lys619).

The protein belongs to the ATP-dependent AMP-binding enzyme family. The cofactor is Mg(2+). Acetylated. Deacetylation by the SIR2-homolog deacetylase activates the enzyme.

The catalysed reaction is acetate + ATP + CoA = acetyl-CoA + AMP + diphosphate. Catalyzes the conversion of acetate into acetyl-CoA (AcCoA), an essential intermediate at the junction of anabolic and catabolic pathways. AcsA undergoes a two-step reaction. In the first half reaction, AcsA combines acetate with ATP to form acetyl-adenylate (AcAMP) intermediate. In the second half reaction, it can then transfer the acetyl group from AcAMP to the sulfhydryl group of CoA, forming the product AcCoA. The protein is Acetyl-coenzyme A synthetase of Wolinella succinogenes (strain ATCC 29543 / DSM 1740 / CCUG 13145 / JCM 31913 / LMG 7466 / NCTC 11488 / FDC 602W) (Vibrio succinogenes).